A 178-amino-acid chain; its full sequence is ATP-dependent protease subunit HslV (178 aa).

The active site involves threonine 5. Na(+) is bound by residues alanine 160, cysteine 163, and threonine 166.

Belongs to the peptidase T1B family. HslV subfamily. As to quaternary structure, a double ring-shaped homohexamer of HslV is capped on each side by a ring-shaped HslU homohexamer. The assembly of the HslU/HslV complex is dependent on binding of ATP.

It is found in the cytoplasm. It carries out the reaction ATP-dependent cleavage of peptide bonds with broad specificity.. Allosterically activated by HslU binding. In terms of biological role, protease subunit of a proteasome-like degradation complex believed to be a general protein degrading machinery. This is ATP-dependent protease subunit HslV from Magnetococcus marinus (strain ATCC BAA-1437 / JCM 17883 / MC-1).